The primary structure comprises 1337 residues: MAPVLHFYVRPSGHEGAASGRVFRRLQEKLPTLQSVETELCYNVHWAAETLPWAEEMKKLMWLFGCPLVRDDVAQEPWLVPGSNDLLLEVGPRLNFSTPASTNIVSVCQAAGLRAVDRVETTRRYRLSFTDHPTAEMEAISLAALHDRMTEQHYPDPIQSFSPQSIPAPLKGSIDILAEGRPALEKANQELGLALDSWDLDFYTKRFQELQRNPSTVEVFDLAQSNSEHSRHWFFKGQLHVDGKKLAHSLFESIMSTQASSNPNNVLKFCDNSSAIQGKKVKFLRPEDSTRPSCFQQQQGLRHVVFTAETHNFPTGVAPFSGATTGTGGRIRDVQCTGRGAHVVAGTAGYCFGNLHIPDYNLPWEDPSFQYPGNFARPLEVAIEASNGASDYGNKFGEPVLAGFARSLGLQLPDGQRREWIKPIMFSGGIGSMEAKHVGKKPPEPGMEVVKVGGPVYRIGVGGGAASSVQVQGDNTSDLDFGAVQRGDPEMEQKMNRVIRACVEAPGGNPICSLHDQGAGGNGNVLKELSDPEGAIIYTSRFQLGDPTLNALEIWGAEYQESNALLLRPSDRDFLSRASARERCPACFVGTITGDKRIVLVDDRECLVGKTGQGDAPLTPPTPVDLDLDWVLGKMPQKEFFLQRKPPVLQPLALPPELSVRQALNRVLRLPAVASKRYLTNKVDRSVGGLVAQQQCVGPLQTPLADVAVVALSHQECIGAATALGEQPVKSLLDPKAAARLAVSEALTNLVFALVTDLRDVKCSGNWMWAAKLPGEGAALADACEAMVAVMAALGVAVDGGKDSLSMAARVGTETVQAPGSLVISAYAVCPDITATVTPDLKHPGGKGHLLYVPLSPGQHRLGGTALAQCFSQLGEHPPDLDLPENLVRAFHITQGLLKECRLCSGHDVSDGGLVTCLLEMAFAGNCGIEVDVPAPGIHALPVLFAEEPGLVLEVQEADVAGVRQRYESAGLRCLELGHTGEAGPQAMARISVNKAVVVEEPVGELRALWEETSFQLDLLQAEPRCVIEEKQGLKERTGPSYYLPPTFPVASVPCKPGGPVPRVAILREEGSNGDREMADAFHLAGFEVWDVTMQDLCSGAIRLDTFRGVAFVGGFSYADVLGSAKGWAAAVTFNPQAREELGRFRRRPDTFSLGVCNGCQLLALLGWVGSDPSEEQAEPGQDSQPTQPGLLLRHNLSGRFESRWATVRVEPGPALMLRGMEGSVLPVWSAHGEGYMAFSSPELQAKIEAKGLVPLHWADDDGNPTEQYPLNPNGSPGGIAGICSQDGRHLALMPHPERAVRLWQWAWRPSPFDVLPTSPWLQLFINARNWTQEDSC.

The residue at position 215 (serine 215) is a Phosphoserine. ATP is bound by residues 322 to 333 (GATTGTGGRIRD) and 402 to 404 (AGF). Threonine 619 and threonine 622 each carry phosphothreonine. Position 705 (alanine 705) interacts with ATP. Residues aspartate 706, glutamate 745, asparagine 749, and aspartate 908 each contribute to the Mg(2+) site. Serine 910 is a binding site for ATP. A Glutamine amidotransferase type-1 domain is found at 1063-1301 (RVAILREEGS…ALMPHPERAV (239 aa)). The active-site Nucleophile is the cysteine 1157. Active-site residues include histidine 1296 and glutamate 1298.

It in the N-terminal section; belongs to the FGAMS family.

Its subcellular location is the cytoplasm. It catalyses the reaction N(2)-formyl-N(1)-(5-phospho-beta-D-ribosyl)glycinamide + L-glutamine + ATP + H2O = 2-formamido-N(1)-(5-O-phospho-beta-D-ribosyl)acetamidine + L-glutamate + ADP + phosphate + H(+). It functions in the pathway purine metabolism; IMP biosynthesis via de novo pathway; 5-amino-1-(5-phospho-D-ribosyl)imidazole from N(2)-formyl-N(1)-(5-phospho-D-ribosyl)glycinamide: step 1/2. In terms of biological role, phosphoribosylformylglycinamidine synthase involved in the purines biosynthetic pathway. Catalyzes the ATP-dependent conversion of formylglycinamide ribonucleotide (FGAR) and glutamine to yield formylglycinamidine ribonucleotide (FGAM) and glutamate. The protein is Phosphoribosylformylglycinamidine synthase (Pfas) of Mus musculus (Mouse).